An 811-amino-acid polypeptide reads, in one-letter code: Exocyst complex component 6B (811 aa).

A coiled-coil region spans residues 50–119 (MEKLETRIRN…LVIAMEELKQ (70 aa)). Residues 260–280 (STSPKSEQDSGILDVEDEEDD) are disordered.

The protein belongs to the SEC15 family. In terms of assembly, the exocyst complex is composed of SEC3, SEC5, SEC6, SEC8, SEC10, SEC15, EXO70 and EXO84.

In terms of biological role, component of the exocyst complex involved in the docking of exocytic vesicles with fusion sites on the plasma membrane. The protein is Exocyst complex component 6B (EXOC6B) of Homo sapiens (Human).